The primary structure comprises 205 residues: MAEHMMMSMSHGGTGLQSYRMGVSGLQGPPQHGQHVLRTLPAAGQMMPYGGAGMDGAMRPRPNLSGQMSHHQMQNAMMFNGPSQQQQQYMGPVGTQQLMASMHLQKLNTQYQGHPLGMSNGPMGAGAQQYRVGPSQHPGMQHMPSPALTLNVMDTDLIDEEVLTSLVLELGLDRIQELPELFLGQNEFDFISDFVSKQQPSAISC.

The protein belongs to the CITED family.

The protein localises to the nucleus. Acts as a transcriptional coactivator. Enhances estrogen-dependent transactivation mediated by estrogen receptors. The polypeptide is Cbp/p300-interacting transactivator 3 (CITED3) (Gallus gallus (Chicken)).